Here is a 147-residue protein sequence, read N- to C-terminus: MAFLSWTFFPSFFHFLERNRFFLTFATQLHYLNPFYILSFRVEWHQIWENLAYSDTNTFFHEYCWKIFPCLSAGIRNNGCCDAAKGQGKNKQHTPKQEEEIPNTSLRRHRSCCNMFTCSSPCYYLEINVGVIGVRRPVLSEEQRKNC.

This is an uncharacterized protein from Saccharomyces cerevisiae (strain ATCC 204508 / S288c) (Baker's yeast).